A 127-amino-acid chain; its full sequence is Aspartate 1-decarboxylase (127 aa).

Residue serine 25 is the Schiff-base intermediate with substrate; via pyruvic acid of the active site. The residue at position 25 (serine 25) is a Pyruvic acid (Ser). Threonine 57 provides a ligand contact to substrate. Tyrosine 58 serves as the catalytic Proton donor. 73–75 (GAA) is a substrate binding site.

It belongs to the PanD family. In terms of assembly, heterooctamer of four alpha and four beta subunits. Requires pyruvate as cofactor. In terms of processing, is synthesized initially as an inactive proenzyme, which is activated by self-cleavage at a specific serine bond to produce a beta-subunit with a hydroxyl group at its C-terminus and an alpha-subunit with a pyruvoyl group at its N-terminus.

It localises to the cytoplasm. The enzyme catalyses L-aspartate + H(+) = beta-alanine + CO2. It participates in cofactor biosynthesis; (R)-pantothenate biosynthesis; beta-alanine from L-aspartate: step 1/1. Functionally, catalyzes the pyruvoyl-dependent decarboxylation of aspartate to produce beta-alanine. This Neisseria meningitidis serogroup C / serotype 2a (strain ATCC 700532 / DSM 15464 / FAM18) protein is Aspartate 1-decarboxylase.